The following is a 76-amino-acid chain: DNA-directed RNA polymerase subunit omega (76 aa).

It belongs to the RNA polymerase subunit omega family. In terms of assembly, the RNAP catalytic core consists of 2 alpha, 1 beta, 1 beta' and 1 omega subunit. When a sigma factor is associated with the core the holoenzyme is formed, which can initiate transcription.

The catalysed reaction is RNA(n) + a ribonucleoside 5'-triphosphate = RNA(n+1) + diphosphate. In terms of biological role, promotes RNA polymerase assembly. Latches the N- and C-terminal regions of the beta' subunit thereby facilitating its interaction with the beta and alpha subunits. This Staphylococcus carnosus (strain TM300) protein is DNA-directed RNA polymerase subunit omega.